A 429-amino-acid chain; its full sequence is Small ribosomal subunit protein uS5m (429 aa).

The disordered stretch occupies residues 108–127 (AGAKKGRGKRTKKKKRKDLN). A compositionally biased stretch (basic residues) spans 111–125 (KKGRGKRTKKKKRKD). The S5 DRBM domain occupies 218-282 (FDTRILEVRN…NRAVHHLYYI (65 aa)).

Belongs to the universal ribosomal protein uS5 family. Component of the mitochondrial ribosome small subunit (28S) which comprises a 12S rRNA and about 30 distinct proteins.

It localises to the mitochondrion. This chain is Small ribosomal subunit protein uS5m (MRPS5), found in Pongo abelii (Sumatran orangutan).